We begin with the raw amino-acid sequence, 442 residues long: Protein UNUSUAL FLORAL ORGANS (442 aa).

The tract at residues 1 to 85 (MDSTVFINNP…RFYSLLFSNT (85 aa)) is interaction with SKP1A. The region spanning 44–90 (GRIWSKLPPPLLDRVIAFLPPPAFFRTRCVCKRFYSLLFSNTFLETY) is the F-box domain.

As to quaternary structure, part of a putative SCF (ASK/Cullin/F-box) ubiquitin ligase complex. Interacts with SKP1A/ASK1, SKP1B/ASK2 and ASK11.

The protein resides in the nucleus. It participates in protein modification; protein ubiquitination. Functionally, component of SCF(ASK-cullin-F-box) E3 ubiquitin ligase complexes, which may mediate the ubiquitination and subsequent proteasomal degradation of target proteins. Considered as a meristem identity factor required for normal growth of the young floral meristem. Acts together with LEAFY to positively regulate the B class floral homeotic genes APETALA3 and PISTILLATA. In this way, operates as a region-specific regulator for petal and stamen development. Alternatively, may play a role as a negative regulator of the C class floral homeotic genes. Interacts together with the SKP1-like protein ASK1 to form a ubiquitin E3 ligase complex and could indirectly promote the ubiquitination and degradation of specific proteins controlling the floral primordia development like repressors of B class floral homeotic genes. This Arabidopsis thaliana (Mouse-ear cress) protein is Protein UNUSUAL FLORAL ORGANS (UFO).